Consider the following 1076-residue polypeptide: DNA-directed RNA polymerase subunit beta (1076 aa).

Belongs to the RNA polymerase beta chain family. As to quaternary structure, in plastids the minimal PEP RNA polymerase catalytic core is composed of four subunits: alpha, beta, beta', and beta''. When a (nuclear-encoded) sigma factor is associated with the core the holoenzyme is formed, which can initiate transcription.

The protein resides in the plastid. The enzyme catalyses RNA(n) + a ribonucleoside 5'-triphosphate = RNA(n+1) + diphosphate. DNA-dependent RNA polymerase catalyzes the transcription of DNA into RNA using the four ribonucleoside triphosphates as substrates. The chain is DNA-directed RNA polymerase subunit beta from Euglena longa (Euglenophycean alga).